A 501-amino-acid polypeptide reads, in one-letter code: Glycerol kinase (501 aa).

Position 16 (T16) interacts with ADP. ATP is bound by residues T16, T17, and S18. T16 lines the sn-glycerol 3-phosphate pocket. R20 contacts ADP. Residues R84, E85, Y135, and D242 each coordinate sn-glycerol 3-phosphate. Glycerol is bound by residues R84, E85, Y135, D242, and Q243. ADP-binding residues include T264 and G307. ATP-binding residues include T264, G307, Q311, and G408. G408 is an ADP binding site.

The protein belongs to the FGGY kinase family.

It catalyses the reaction glycerol + ATP = sn-glycerol 3-phosphate + ADP + H(+). It functions in the pathway polyol metabolism; glycerol degradation via glycerol kinase pathway; sn-glycerol 3-phosphate from glycerol: step 1/1. Functionally, key enzyme in the regulation of glycerol uptake and metabolism. Catalyzes the phosphorylation of glycerol to yield sn-glycerol 3-phosphate. In Saccharolobus islandicus (strain M.16.27) (Sulfolobus islandicus), this protein is Glycerol kinase.